The primary structure comprises 151 residues: Methylated-DNA--protein-cysteine methyltransferase (151 aa).

The active-site Nucleophile; methyl group acceptor is cysteine 119.

This sequence belongs to the MGMT family.

The protein resides in the cytoplasm. The enzyme catalyses a 6-O-methyl-2'-deoxyguanosine in DNA + L-cysteinyl-[protein] = S-methyl-L-cysteinyl-[protein] + a 2'-deoxyguanosine in DNA. The catalysed reaction is a 4-O-methyl-thymidine in DNA + L-cysteinyl-[protein] = a thymidine in DNA + S-methyl-L-cysteinyl-[protein]. Functionally, involved in the cellular defense against the biological effects of O6-methylguanine (O6-MeG) and O4-methylthymine (O4-MeT) in DNA. Repairs the methylated nucleobase in DNA by stoichiometrically transferring the methyl group to a cysteine residue in the enzyme. This is a suicide reaction: the enzyme is irreversibly inactivated. This is Methylated-DNA--protein-cysteine methyltransferase from Saccharolobus islandicus (strain M.16.27) (Sulfolobus islandicus).